Reading from the N-terminus, the 354-residue chain is RNA 3'-terminal phosphate cyclase (354 aa).

ATP contacts are provided by residues Gln-100 and His-290–Asp-293. The active-site Tele-AMP-histidine intermediate is His-316.

This sequence belongs to the RNA 3'-terminal cyclase family. Type 1 subfamily.

Its subcellular location is the cytoplasm. The enzyme catalyses a 3'-end 3'-phospho-ribonucleotide-RNA + ATP = a 3'-end 2',3'-cyclophospho-ribonucleotide-RNA + AMP + diphosphate. Functionally, catalyzes the conversion of 3'-phosphate to a 2',3'-cyclic phosphodiester at the end of RNA. The mechanism of action of the enzyme occurs in 3 steps: (A) adenylation of the enzyme by ATP; (B) transfer of adenylate to an RNA-N3'P to produce RNA-N3'PP5'A; (C) and attack of the adjacent 2'-hydroxyl on the 3'-phosphorus in the diester linkage to produce the cyclic end product. The biological role of this enzyme is unknown but it is likely to function in some aspects of cellular RNA processing. The protein is RNA 3'-terminal phosphate cyclase of Caldivirga maquilingensis (strain ATCC 700844 / DSM 13496 / JCM 10307 / IC-167).